Consider the following 616-residue polypeptide: Dihydroxy-acid dehydratase (616 aa).

Residue Asp81 participates in Mg(2+) binding. Cys122 serves as a coordination point for [2Fe-2S] cluster. The Mg(2+) site is built by Asp123 and Lys124. An N6-carboxylysine modification is found at Lys124. Cys196 lines the [2Fe-2S] cluster pocket. Glu496 lines the Mg(2+) pocket. The active-site Proton acceptor is the Ser522.

It belongs to the IlvD/Edd family. Homodimer. The cofactor is [2Fe-2S] cluster. It depends on Mg(2+) as a cofactor.

The catalysed reaction is (2R)-2,3-dihydroxy-3-methylbutanoate = 3-methyl-2-oxobutanoate + H2O. It catalyses the reaction (2R,3R)-2,3-dihydroxy-3-methylpentanoate = (S)-3-methyl-2-oxopentanoate + H2O. It functions in the pathway amino-acid biosynthesis; L-isoleucine biosynthesis; L-isoleucine from 2-oxobutanoate: step 3/4. Its pathway is amino-acid biosynthesis; L-valine biosynthesis; L-valine from pyruvate: step 3/4. Its function is as follows. Functions in the biosynthesis of branched-chain amino acids. Catalyzes the dehydration of (2R,3R)-2,3-dihydroxy-3-methylpentanoate (2,3-dihydroxy-3-methylvalerate) into 2-oxo-3-methylpentanoate (2-oxo-3-methylvalerate) and of (2R)-2,3-dihydroxy-3-methylbutanoate (2,3-dihydroxyisovalerate) into 2-oxo-3-methylbutanoate (2-oxoisovalerate), the penultimate precursor to L-isoleucine and L-valine, respectively. The sequence is that of Dihydroxy-acid dehydratase from Streptomyces griseus subsp. griseus (strain JCM 4626 / CBS 651.72 / NBRC 13350 / KCC S-0626 / ISP 5235).